Here is a 48-residue protein sequence, read N- to C-terminus: Mating-type pheromone BAP1(2) (48 aa).

The residue at position 45 (Cys45) is a Cysteine methyl ester. Cys45 carries the S-farnesyl cysteine lipid modification. Residues 46 to 48 (VRG) constitute a propeptide, removed in mature form.

Its subcellular location is the cell membrane. Functionally, activates B-regulated development. This chain is Mating-type pheromone BAP1(2) (BAP1(2)), found in Schizophyllum commune (Split gill fungus).